Consider the following 62-residue polypeptide: MPKMKTKSGLKKRIKITATGKVKRGNAYRSHLAQNKTTKQKRQSRKSSQLSHSDFKRYKELI.

Basic residues predominate over residues 1 to 26 (MPKMKTKSGLKKRIKITATGKVKRGN). Residues 1–62 (MPKMKTKSGL…SDFKRYKELI (62 aa)) form a disordered region. A compositionally biased stretch (basic and acidic residues) spans 53–62 (SDFKRYKELI).

It belongs to the bacterial ribosomal protein bL35 family.

This chain is Large ribosomal subunit protein bL35, found in Metamycoplasma arthritidis (strain 158L3-1) (Mycoplasma arthritidis).